The primary structure comprises 401 residues: Probable tRNA sulfurtransferase (401 aa).

In terms of domain architecture, THUMP spans 63–168; sequence TTAEQALSCL…EREAFLYGAR (106 aa). ATP-binding positions include 186-187, 211-212, Arg-268, Gly-290, and Gln-299; these read LL and YF.

This sequence belongs to the ThiI family.

Its subcellular location is the cytoplasm. It carries out the reaction [ThiI sulfur-carrier protein]-S-sulfanyl-L-cysteine + a uridine in tRNA + 2 reduced [2Fe-2S]-[ferredoxin] + ATP + H(+) = [ThiI sulfur-carrier protein]-L-cysteine + a 4-thiouridine in tRNA + 2 oxidized [2Fe-2S]-[ferredoxin] + AMP + diphosphate. The enzyme catalyses [ThiS sulfur-carrier protein]-C-terminal Gly-Gly-AMP + S-sulfanyl-L-cysteinyl-[cysteine desulfurase] + AH2 = [ThiS sulfur-carrier protein]-C-terminal-Gly-aminoethanethioate + L-cysteinyl-[cysteine desulfurase] + A + AMP + 2 H(+). It functions in the pathway cofactor biosynthesis; thiamine diphosphate biosynthesis. In terms of biological role, catalyzes the ATP-dependent transfer of a sulfur to tRNA to produce 4-thiouridine in position 8 of tRNAs, which functions as a near-UV photosensor. Also catalyzes the transfer of sulfur to the sulfur carrier protein ThiS, forming ThiS-thiocarboxylate. This is a step in the synthesis of thiazole, in the thiamine biosynthesis pathway. The sulfur is donated as persulfide by IscS. In Treponema pallidum subsp. pallidum (strain SS14), this protein is Probable tRNA sulfurtransferase.